The primary structure comprises 306 residues: Ribosomal protein L11 methyltransferase (306 aa).

Thr-154, Gly-179, Asp-201, and Asn-242 together coordinate S-adenosyl-L-methionine.

Belongs to the methyltransferase superfamily. PrmA family.

It localises to the cytoplasm. The enzyme catalyses L-lysyl-[protein] + 3 S-adenosyl-L-methionine = N(6),N(6),N(6)-trimethyl-L-lysyl-[protein] + 3 S-adenosyl-L-homocysteine + 3 H(+). In terms of biological role, methylates ribosomal protein L11. In Xylella fastidiosa (strain 9a5c), this protein is Ribosomal protein L11 methyltransferase.